A 439-amino-acid polypeptide reads, in one-letter code: Serine--tRNA ligase (439 aa).

242–244 (TAE) contributes to the L-serine binding site. 273–275 (RQE) contacts ATP. Glu-296 serves as a coordination point for L-serine. ATP is bound at residue 360–363 (EISS). Ser-396 serves as a coordination point for L-serine.

Belongs to the class-II aminoacyl-tRNA synthetase family. Type-1 seryl-tRNA synthetase subfamily. In terms of assembly, homodimer. The tRNA molecule binds across the dimer.

The protein resides in the cytoplasm. It catalyses the reaction tRNA(Ser) + L-serine + ATP = L-seryl-tRNA(Ser) + AMP + diphosphate + H(+). The enzyme catalyses tRNA(Sec) + L-serine + ATP = L-seryl-tRNA(Sec) + AMP + diphosphate + H(+). It participates in aminoacyl-tRNA biosynthesis; selenocysteinyl-tRNA(Sec) biosynthesis; L-seryl-tRNA(Sec) from L-serine and tRNA(Sec): step 1/1. Catalyzes the attachment of serine to tRNA(Ser). Is also able to aminoacylate tRNA(Sec) with serine, to form the misacylated tRNA L-seryl-tRNA(Sec), which will be further converted into selenocysteinyl-tRNA(Sec). The chain is Serine--tRNA ligase from Oenococcus oeni (strain ATCC BAA-331 / PSU-1).